Consider the following 407-residue polypeptide: MSDLHHLLTFPERPISESSYLPELTRLLSAGIPATYTLEQAAAFERGEEVTEEDSNTTPLHILCRSLPSFEGSSKLSEDEESVVLKLMDTLLEYGAGWNFLDYENKHIGDLVLERKYPQDHCIYQRIVDAGVSAELLLRKIDGGEIEFIEDPEDAATEAATEAATEAEVIEGVTKGSEEAPFEDATAADQATYLKTDLEYTDDALVTKENRDGVMMDWETDIMSMAAKSLVSTRSTDECVVLNIGFGMGIIDNFIQDEKVTKHYICEAHPDVLAKMKETGWFDKENVVILEGRWQSRLNELLDQGEVFFDGIYYDTFSEHYQDMLDLYDVIVGLLKPEGTFSFFNGLGADRPVCYDVYRKIVELDVANYGMECRYQVINLRTLPNWNDVKRSYFNCTYYYHPEIRFA.

One can recognise an RMT2 domain in the interval 186–407 (TAADQATYLK…YYYHPEIRFA (222 aa)). S-adenosyl-L-methionine contacts are provided by residues tyrosine 193, methionine 223, 246 to 251 (FGMGII), 267 to 269 (EAH), 294 to 295 (WQ), and aspartate 315.

Belongs to the class I-like SAM-binding methyltransferase superfamily. RMT2 methyltransferase family. Monomer.

It localises to the cytoplasm. The protein resides in the nucleus. S-adenosyl-L-methionine-dependent protein-arginine N-methyltransferase that methylates the delta-nitrogen atom of arginine residues to form N5-methylarginine (type IV) in target proteins. Monomethylates ribosomal protein L12. The polypeptide is Protein arginine N-methyltransferase 2 (Kluyveromyces lactis (strain ATCC 8585 / CBS 2359 / DSM 70799 / NBRC 1267 / NRRL Y-1140 / WM37) (Yeast)).